We begin with the raw amino-acid sequence, 303 residues long: N-acetylmuramic acid 6-phosphate etherase (303 aa).

The region spanning 62–225 (IVAAFRQGGR…TTASMVLLGK (164 aa)) is the SIS domain. The active-site Proton donor is Glu90. Glu121 is a catalytic residue.

It belongs to the GCKR-like family. MurNAc-6-P etherase subfamily. As to quaternary structure, homodimer.

It carries out the reaction N-acetyl-D-muramate 6-phosphate + H2O = N-acetyl-D-glucosamine 6-phosphate + (R)-lactate. The protein operates within amino-sugar metabolism; 1,6-anhydro-N-acetylmuramate degradation. It functions in the pathway amino-sugar metabolism; N-acetylmuramate degradation. It participates in cell wall biogenesis; peptidoglycan recycling. Specifically catalyzes the cleavage of the D-lactyl ether substituent of MurNAc 6-phosphate, producing GlcNAc 6-phosphate and D-lactate. Together with AnmK, is also required for the utilization of anhydro-N-acetylmuramic acid (anhMurNAc) either imported from the medium or derived from its own cell wall murein, and thus plays a role in cell wall recycling. The sequence is that of N-acetylmuramic acid 6-phosphate etherase from Histophilus somni (strain 129Pt) (Haemophilus somnus).